Here is a 586-residue protein sequence, read N- to C-terminus: Acetylcholinesterase (586 aa).

Residues 1-21 (MNLLVTSSLGVLLHLVVLCQA) form the signal peptide. Residue Asn80 is glycosylated (N-linked (GlcNAc...) asparagine). Residues Cys88 and Cys115 are joined by a disulfide bond. The active-site Acyl-ester intermediate is Ser221. A disulfide bridge connects residues Cys275 and Cys286. The active-site Charge relay system is the Glu348. The cysteines at positions 423 and 542 are disulfide-linked. Asn437 carries N-linked (GlcNAc...) asparagine glycosylation. His461 serves as the catalytic Charge relay system. Asn478 and Asn554 each carry an N-linked (GlcNAc...) asparagine glycan. Ser564 carries GPI-anchor amidated serine lipidation. A propeptide spans 565-586 (SGTSSSKGIIFYVLFSILYLIF) (removed in mature form).

This sequence belongs to the type-B carboxylesterase/lipase family. In terms of assembly, isoform H form is a homodimer; the asymmetric form is a disulfide-bonded oligomer composed of a collagenic subunit (Q) and a variable number of T catalytic subunits. In terms of processing, an interchain disulfide bond is present in what becomes position 593 of the T isoform. As to expression, found in the synapses and to a lower extent in extrajunctional areas of muscle and nerve, and on erythrocyte membranes.

It is found in the cell membrane. The protein resides in the synapse. It catalyses the reaction acetylcholine + H2O = choline + acetate + H(+). Its activity is regulated as follows. Inhibited by substrate concentrations above 0.5 mM. Functionally, terminates signal transduction at the neuromuscular junction by rapid hydrolysis of the acetylcholine released into the synaptic cleft. May be involved in cell-cell interactions. The chain is Acetylcholinesterase (ache) from Tetronarce californica (Pacific electric ray).